A 432-amino-acid chain; its full sequence is Putative D-alanyl-D-alanine carboxypeptidase (432 aa).

A helical; Signal-anchor transmembrane segment spans residues 7–25 (ATVLLTFSLSAFAVEYPVL).

This sequence belongs to the peptidase S12 family. YfeW subfamily.

Its subcellular location is the cell inner membrane. The enzyme catalyses Preferential cleavage: (Ac)2-L-Lys-D-Ala-|-D-Ala. Also transpeptidation of peptidyl-alanyl moieties that are N-acyl substituents of D-alanine.. The sequence is that of Putative D-alanyl-D-alanine carboxypeptidase from Salmonella schwarzengrund (strain CVM19633).